The primary structure comprises 224 residues: Large ribosomal subunit protein uL4 (224 aa).

Residues 54–73 (NRSEVSHSTKKPFRQKGTGN) form a disordered region.

The protein belongs to the universal ribosomal protein uL4 family. In terms of assembly, part of the 50S ribosomal subunit.

Functionally, one of the primary rRNA binding proteins, this protein initially binds near the 5'-end of the 23S rRNA. It is important during the early stages of 50S assembly. It makes multiple contacts with different domains of the 23S rRNA in the assembled 50S subunit and ribosome. In terms of biological role, forms part of the polypeptide exit tunnel. This Chlamydia felis (strain Fe/C-56) (Chlamydophila felis) protein is Large ribosomal subunit protein uL4.